The sequence spans 524 residues: MVAKDYPFYLTVKRANCALDVEAASSPAKETEEPSNKRVKPLSRVTSLANLIPPVRATPLKRFSQTLQRSISFRSDSRPDLFSPRPWSRNTPAANTKRRDSKLWSETFDVCVNHMLTSKEIKRQEAIFELSKGEEDLIEDLKLAKKAYHDPMLKLSIMTEQELNQIFGTLDSLIPLHEDLLRRLQEVRKSDGSTEHVGHILVGWLPCLNSYDSYCSNQVAAKALLDHKKQDHRVQDFLQRCLESPFSRKLDLWNFLDIPRSRLVKYPLLLREILRHTPNDHPDQQHLEEAINIIQGIVAEINIKTGESECQYYKERLIYLEGGQRDSLIDNSRVLCCHGELKNNRGVKLHVFLFQEVLVITRAITHNEQLCYQLYRQPIPVMDLVLEDLQDGEVRLGGSIRGAFSNNERIKNFFRVSFKNGSQSQSHSLQANDSFNKQQWLNCIRQAKEKVTCAGKAGVLSSEACFILSPNGSRVSQGETMIEQMDQSDSESDCSMDTSEISIDCERMEQTNPCENEKQIETNV.

A disordered region spans residues 75–98; the sequence is SDSRPDLFSPRPWSRNTPAANTKR. The DH domain occupies 121–303; it reads IKRQEAIFEL…IQGIVAEINI (183 aa). Positions 290–448 constitute a PH domain; that stretch reads AINIIQGIVA…QWLNCIRQAK (159 aa).

Its subcellular location is the cytoplasm. Its function is as follows. Acts as a guanine nucleotide exchange factor (GEF) for RhoA and RhoB GTPases. This Gallus gallus (Chicken) protein is Rho guanine nucleotide exchange factor 3 (Arhgef3).